A 298-amino-acid polypeptide reads, in one-letter code: 4-hydroxy-tetrahydrodipicolinate synthase (298 aa).

Residue T51 participates in pyruvate binding. The Proton donor/acceptor role is filled by Y139. The active-site Schiff-base intermediate with substrate is the K167. Residue I209 participates in pyruvate binding.

It belongs to the DapA family. As to quaternary structure, homotetramer; dimer of dimers.

It is found in the cytoplasm. The enzyme catalyses L-aspartate 4-semialdehyde + pyruvate = (2S,4S)-4-hydroxy-2,3,4,5-tetrahydrodipicolinate + H2O + H(+). The protein operates within amino-acid biosynthesis; L-lysine biosynthesis via DAP pathway; (S)-tetrahydrodipicolinate from L-aspartate: step 3/4. In terms of biological role, catalyzes the condensation of (S)-aspartate-beta-semialdehyde [(S)-ASA] and pyruvate to 4-hydroxy-tetrahydrodipicolinate (HTPA). The protein is 4-hydroxy-tetrahydrodipicolinate synthase of Haemophilus influenzae (strain PittEE).